A 602-amino-acid chain; its full sequence is Translation factor GUF1 homolog, organellar chromatophore (602 aa).

Residues 7–189 (SRIRNFCIIA…AIVERIPPPV (183 aa)) form the tr-type G domain. GTP is bound by residues 16–23 (AHIDHGKS), 82–86 (DTPGH), and 136–139 (NKID).

The protein belongs to the TRAFAC class translation factor GTPase superfamily. Classic translation factor GTPase family. LepA subfamily.

The protein localises to the plastid. The protein resides in the organellar chromatophore. The catalysed reaction is GTP + H2O = GDP + phosphate + H(+). Functionally, promotes protein synthesis. May act as a fidelity factor of the translation reaction, by catalyzing a one-codon backward translocation of tRNAs on improperly translocated ribosomes. This Paulinella chromatophora protein is Translation factor GUF1 homolog, organellar chromatophore.